A 608-amino-acid chain; its full sequence is ATP-citrate synthase beta chain protein 2 (608 aa).

ATP contacts are provided by residues 214 to 234 (ILRF…ELGG) and 265 to 291 (FKSE…KNQA). E231 provides a ligand contact to Mg(2+). The Tele-phosphohistidine intermediate role is filled by H273. 292 to 302 (LIDAGAIVPTS) is a binding site for CoA.

Belongs to the succinate/malate CoA ligase alpha subunit family. In terms of assembly, heterooctamer of 4 alpha and 4 beta chains. In terms of tissue distribution, expressed in trichomes, epidermal leaf cells, anther tapetal cells, stigma and in young vascular bundles of expanding leaves, cotyledons, roots, pedicel of flowers and siliques.

It is found in the cytoplasm. Its subcellular location is the cytosol. The catalysed reaction is oxaloacetate + acetyl-CoA + ADP + phosphate = citrate + ATP + CoA. Its function is as follows. ATP citrate-lyase is the primary enzyme responsible for the synthesis of cytosolic acetyl-CoA, used for the elongation of fatty acids and biosynthesis of isoprenoids, flavonoids and malonated derivatives. May supply substrate to the cytosolic acetyl-CoA carboxylase, which generates the malonyl-CoA used for the synthesis of a multitude of compounds, including very long chain fatty acids and flavonoids. Required for normal growth and development and elongation of C18 fatty acids to C20 to C24 fatty acids in seeds. n contrast to all known animal ACL enzymes having a homomeric structure, plant ACLs are composed of alpha and beta chains. In Arabidopsis thaliana (Mouse-ear cress), this protein is ATP-citrate synthase beta chain protein 2.